The chain runs to 349 residues: Isopentenyl-diphosphate delta-isomerase (349 aa).

Residue 5 to 6 (RK) coordinates substrate. FMN is bound by residues S62, 63-65 (AIT), S93, and N122. 93–95 (SQR) is a binding site for substrate. Q151 is a binding site for substrate. Position 152 (E152) interacts with Mg(2+). FMN is bound by residues K183, T213, 259 to 261 (GIR), and 280 to 281 (AL).

The protein belongs to the IPP isomerase type 2 family. In terms of assembly, homooctamer. Dimer of tetramers. FMN is required as a cofactor. NADPH serves as cofactor. Requires Mg(2+) as cofactor.

The protein localises to the cytoplasm. The enzyme catalyses isopentenyl diphosphate = dimethylallyl diphosphate. In terms of biological role, involved in the biosynthesis of isoprenoids. Catalyzes the 1,3-allylic rearrangement of the homoallylic substrate isopentenyl (IPP) to its allylic isomer, dimethylallyl diphosphate (DMAPP). The sequence is that of Isopentenyl-diphosphate delta-isomerase from Methanothermobacter thermautotrophicus (strain ATCC 29096 / DSM 1053 / JCM 10044 / NBRC 100330 / Delta H) (Methanobacterium thermoautotrophicum).